Reading from the N-terminus, the 473-residue chain is Reticulon-4 receptor (473 aa).

A signal peptide spans 1–26 (MKRASAGGSRLLAWVLWLQAWQVAAP). 2 disulfides stabilise this stretch: cysteine 27–cysteine 33 and cysteine 31–cysteine 43. Residues 27 to 54 (CPGACVCYNEPKVTTSCPQQGLQAVPVG) form the LRRNT domain. 9 LRR repeats span residues 55–79 (IPAA…SFRA), 81–103 (RNLT…AFTG), 104–128 (LALL…TFHG), 129–152 (LGRL…LFRG), 153–176 (LAAL…TFRD), 178–200 (GNLT…AFRG), 202–224 (HSLD…AFRD), 225–248 (LGRL…ALAP), and 250–273 (RALQ…PLWA). A glycan (N-linked (GlcNAc...) asparagine) is linked at asparagine 82. Asparagine 179 carries N-linked (GlcNAc...) asparagine glycosylation. The region spanning 260–310 (NPWVCDCRARPLWAWLQKFRGSSSEVPCSLPQRLAGRDLKRLAANDLQGCA) is the LRRCT domain. 3 disulfide bridges follow: cysteine 264–cysteine 287, cysteine 266–cysteine 335, and cysteine 309–cysteine 336. The segment at 346–447 (VLEPGRPASA…GGGTGDSEGS (102 aa)) is disordered. Residues 413–429 (PRRRPGCSRKNRTRSHC) are compositionally biased toward basic residues. Positions 434–445 (AGSGGGGTGDSE) are enriched in gly residues. Residue serine 447 is the site of GPI-anchor amidated serine attachment. A propeptide spans 448–473 (GALPSLTCSLTPLGLALVLWTVLGPC) (removed in mature form).

It belongs to the Nogo receptor family. Homodimer. Interacts with MAG. Interacts with RTN4. Interacts with NGFR. Interacts with LINGO1. Interacts with KIAA0319L. Interacts with OLFM1; this inhibits interaction with LINGO1 and NGFR. Interacts with OMG. In terms of processing, N-glycosylated. O-glycosylated. Contains terminal sialic acid groups on its glycan chains. As to expression, widespread in the brain but highest levels in the gray matter. Low levels in heart and kidney; not expressed in oligodendrocytes (white matter).

Its subcellular location is the cell membrane. It localises to the membrane raft. It is found in the cell projection. The protein resides in the dendrite. The protein localises to the axon. Its subcellular location is the perikaryon. Receptor for RTN4, OMG and MAG. Functions as a receptor for the sialylated gangliosides GT1b and GM1. Besides, functions as a receptor for chondroitin sulfate proteoglycans. Can also bind heparin. Intracellular signaling cascades are triggered via the coreceptor NGFR. Signaling mediates activation of Rho and downstream reorganization of the actin cytoskeleton. Mediates axonal growth inhibition. Plays a role in regulating axon regeneration and neuronal plasticity in the adult central nervous system. Plays a role in postnatal brain development. Required for normal axon migration across the brain midline and normal formation of the corpus callosum. Protects motoneurons against apoptosis; protection against apoptosis is probably mediated via interaction with MAG. Acts in conjunction with RTN4 and LINGO1 in regulating neuronal precursor cell motility during cortical development. Like other family members, plays a role in restricting the number dendritic spines and the number of synapses that are formed during brain development. The protein is Reticulon-4 receptor (RTN4R) of Homo sapiens (Human).